A 677-amino-acid polypeptide reads, in one-letter code: Penicillin-binding protein activator LpoA (677 aa).

Residues 1 to 26 (MLPSKIVRHKAGRFVPVLLAGLILAA) form the signal peptide. Residue cysteine 27 is the site of N-palmitoyl cysteine attachment. Cysteine 27 carries S-diacylglycerol cysteine lipidation. Residues 309-359 (QPADANAVVSPSANPAAAQQSGTAQQPATTQQQPQQQPAAEPASNAQVKVY) form a disordered region. Residues 313-355 (ANAVVSPSANPAAAQQSGTAQQPATTQQQPQQQPAAEPASNAQ) show a composition bias toward low complexity.

This sequence belongs to the LpoA family. As to quaternary structure, interacts with PBP1a.

It localises to the cell outer membrane. Regulator of peptidoglycan synthesis that is essential for the function of penicillin-binding protein 1A (PBP1a). The protein is Penicillin-binding protein activator LpoA of Pantoea ananatis (strain LMG 20103).